The following is a 424-amino-acid chain: Serine/threonine-protein kinase H1 (424 aa).

Gly2 carries N-myristoyl glycine lipidation. Cys3 is lipidated: S-palmitoyl cysteine. A disordered region spans residues 56–80; that stretch reads SQYAHPCPGPPTAGHTEPPSEPPRR. The Protein kinase domain maps to 98–355; that stretch reads YDIKALIGRG…ALQALRHPWV (258 aa). ATP contacts are provided by residues 104 to 112 and Lys127; that span reads IGRGSFSRV. Asp218 (proton acceptor) is an active-site residue. Positions 378–407 are disordered; the sequence is RASSRCQSTKSAQSTRSSRSTRSNKSRRVR. 2 positions are modified to phosphoserine; by autocatalysis: Ser380 and Ser381. The span at 385 to 398 shows a compositional bias: low complexity; that stretch reads STKSAQSTRSSRST.

It belongs to the protein kinase superfamily. CAMK Ser/Thr protein kinase family. As to quaternary structure, homodimer. Autophosphorylated on serine residues. Post-translationally, myristoylated. Required for membrane association. Prerequisite for palmitoylation to occur. In terms of processing, palmitoylated. In terms of tissue distribution, expressed in all tissues and cell lines tested with the highest level of abundance in testis.

It localises to the golgi apparatus. The protein resides in the cytoplasm. The protein localises to the cytoskeleton. It is found in the microtubule organizing center. Its subcellular location is the centrosome. It localises to the nucleus speckle. The protein resides in the endoplasmic reticulum membrane. The protein localises to the cell membrane. The catalysed reaction is L-seryl-[protein] + ATP = O-phospho-L-seryl-[protein] + ADP + H(+). It carries out the reaction L-threonyl-[protein] + ATP = O-phospho-L-threonyl-[protein] + ADP + H(+). Activity depends on Ca(2+) concentration. Serine/threonine protein kinase that may be involved in the regulation of pre-mRNA processing. It may phosphorylate components of nuclear splice factor compartments (SFC), such as non-snRNP splicing factors containing a serine/arginine-rich domain (SR proteins). Reversible phosphorylation of SR proteins may cause their release into the nucleoplasm and change their local concentration, thereby influencing alternative splicing. The sequence is that of Serine/threonine-protein kinase H1 (PSKH1) from Homo sapiens (Human).